We begin with the raw amino-acid sequence, 536 residues long: Interferon alpha/beta receptor 2 (536 aa).

Positions 1–26 are cleaved as a signal peptide; that stretch reads MLLSQNVSAIGPLNLYPMVHISLVFG. Residues 27 to 246 are Extracellular-facing; the sequence is ISYVVPDLSD…RESESSEPAT (220 aa). Disulfide bonds link C39/C122 and C85/C93. Residues N58, N87, N101, N147, and N191 are each glycosylated (N-linked (GlcNAc...) asparagine). An intrachain disulfide couples C210 to C230. The helical transmembrane segment at 247-267 threads the bilayer; it reads IGGILILFLLAAVCISTVMIL. Over 268 to 536 the chain is Cytoplasmic; sequence KRIGYICLRN…VRQVNLKNFN (269 aa). Residue Y340 is modified to Phosphotyrosine. Repeat copies occupy residues 358–362, 363–367, and 368–372. A 3 X 5 AA tandem repeats of S-L-E-D-C region spans residues 358–372; sequence SLEDCSLEDCSLEDC. A disordered region spans residues 369-434; that stretch reads LEDCSDPSAE…SDSTEGSEGR (66 aa). The segment covering 420–429 has biased composition (acidic residues); sequence TSEEDSDSTE. The segment at 432–456 is mediates interaction with STAT2 (and required for the recruitment of USP18); it reads EGRIVFNVNLNSVCVRALEDDKDSE. Residue S480 is modified to Phosphoserine. The tract at residues 487 to 522 is disordered; it reads EEGTQLPFTDPSMECLRPQDALSDKSDTSESDVDIG. Phosphotyrosine is present on Y525.

The protein belongs to the type II cytokine receptor family. Heterodimer with IFNAR1; forming the receptor for type I interferon. Interacts with the transcriptional factors STAT1 and STAT2. Interacts with JAK1. Interacts with USP18; indirectly via STAT2, it negatively regulates the assembly of the ternary interferon-IFNAR1-IFNAR2 complex and therefore type I interferon signaling. Post-translationally, phosphorylated on tyrosine residues upon interferon binding. Phosphorylation at Tyr-340 or Tyr-525 are sufficient to mediate interferon dependent activation of STAT1, STAT2 and STAT3 leading to antiproliferative effects on many different cell types. Expressed in the endometrium. Expressed in all tissues examined except conceptus at day 15 of pregnancy.

It is found in the cell membrane. Its function is as follows. Together with IFNAR1, forms the heterodimeric receptor for type I interferons (including interferons alpha, beta, epsilon, omega and kappa). Type I interferon binding activates the JAK-STAT signaling cascade, resulting in transcriptional activation or repression of interferon-regulated genes that encode the effectors of the interferon response. Mechanistically, type I interferon-binding brings the IFNAR1 and IFNAR2 subunits into close proximity with one another, driving their associated Janus kinases (JAKs) (TYK2 bound to IFNAR1 and JAK1 bound to IFNAR2) to cross-phosphorylate one another. The activated kinases phosphorylate specific tyrosine residues on the intracellular domains of IFNAR1 and IFNAR2, forming docking sites for the STAT transcription factors (STAT1, STAT2 and STAT). STAT proteins are then phosphorylated by the JAKs, promoting their translocation into the nucleus to regulate expression of interferon-regulated genes. This is Interferon alpha/beta receptor 2 (IFNAR2) from Ovis aries (Sheep).